The sequence spans 325 residues: Olfactory receptor 5H6 (325 aa).

Residues 1–41 (MFLYLCFIFQRTCSEEMEEENATLLTEFVLTGFLHQPDCKI) lie on the Extracellular side of the membrane. Asn21 is a glycosylation site (N-linked (GlcNAc...) asparagine). A helical transmembrane segment spans residues 42–62 (PLFLAFLVIYLITIMGNLGLI). The Cytoplasmic portion of the chain corresponds to 63–70 (VLIWKDPH). Residues 71-91 (LHIPMYLFLGSLAFVDASLSS) form a helical membrane-spanning segment. The Extracellular segment spans residues 92-115 (TVTPKMLINFLAKSKMISLSECMV). The cysteines at positions 113 and 205 are disulfide-linked. A helical transmembrane segment spans residues 116–136 (QFFSLVTTVTTECFLLATMAY). Over 137-155 (DRYVAICKALLYPVIMTNE) the chain is Cytoplasmic. Residues 156 to 176 (LCIQLLVLSFIGGLLHALIHE) traverse the membrane as a helical segment. Topologically, residues 177 to 212 (AFSFRLTFCNSNIIQHFYCDIIPLLKISCTDSSINF) are extracellular. The helical transmembrane segment at 213–233 (LMVFIFAGSVQVFTIGTILIS) threads the bilayer. Residues 234 to 253 (YTIILFTILEKKSIKGIRKA) are Cytoplasmic-facing. A helical membrane pass occupies residues 254 to 274 (VSTCGAHLLSVSLYYGPLTFK). Residues 275-287 (YLGSASPQADDQD) are Extracellular-facing. The chain crosses the membrane as a helical span at residues 288 to 308 (MMESLFYTVIVPLLNPMIYSL). Over 309–325 (RNKQVIASFTKMFKSNV) the chain is Cytoplasmic.

The protein belongs to the G-protein coupled receptor 1 family.

Its subcellular location is the cell membrane. Its function is as follows. Odorant receptor. This is Olfactory receptor 5H6 (OR5H6) from Homo sapiens (Human).